A 317-amino-acid chain; its full sequence is Transaldolase (317 aa).

Lysine 132 (schiff-base intermediate with substrate) is an active-site residue.

It belongs to the transaldolase family. Type 1 subfamily. Homodimer.

The protein localises to the cytoplasm. It catalyses the reaction D-sedoheptulose 7-phosphate + D-glyceraldehyde 3-phosphate = D-erythrose 4-phosphate + beta-D-fructose 6-phosphate. Its pathway is carbohydrate degradation; pentose phosphate pathway; D-glyceraldehyde 3-phosphate and beta-D-fructose 6-phosphate from D-ribose 5-phosphate and D-xylulose 5-phosphate (non-oxidative stage): step 2/3. Transaldolase is important for the balance of metabolites in the pentose-phosphate pathway. This chain is Transaldolase, found in Edwardsiella ictaluri (strain 93-146).